The chain runs to 101 residues: NAD(P)H-quinone oxidoreductase subunit 4L, chloroplastic (101 aa).

Transmembrane regions (helical) follow at residues 2–22 (MLEHVLVLSAYLFSVGLYGLI), 32–52 (MCLELILNAVNLNFVTFSDFF), and 61–81 (IFSIFVIAIAAAEAAIGLAIV).

It belongs to the complex I subunit 4L family. In terms of assembly, NDH is composed of at least 16 different subunits, 5 of which are encoded in the nucleus.

The protein localises to the plastid. It is found in the chloroplast thylakoid membrane. The catalysed reaction is a plastoquinone + NADH + (n+1) H(+)(in) = a plastoquinol + NAD(+) + n H(+)(out). It carries out the reaction a plastoquinone + NADPH + (n+1) H(+)(in) = a plastoquinol + NADP(+) + n H(+)(out). In terms of biological role, NDH shuttles electrons from NAD(P)H:plastoquinone, via FMN and iron-sulfur (Fe-S) centers, to quinones in the photosynthetic chain and possibly in a chloroplast respiratory chain. The immediate electron acceptor for the enzyme in this species is believed to be plastoquinone. Couples the redox reaction to proton translocation, and thus conserves the redox energy in a proton gradient. The protein is NAD(P)H-quinone oxidoreductase subunit 4L, chloroplastic of Helianthus annuus (Common sunflower).